Here is a 266-residue protein sequence, read N- to C-terminus: MLNVLLRRKAFCLVTKKGMATATTAAATHTPRLKTFKVYRWNPDEPSAKPHLQSYQVDLNDCGPMVLDALLKIKDEQDSTLTFRRSCREGICGSCAMNIGGRNTLACICKIDQNESKQLKIYPLPHMFIVKDLVPDLTNFYQQYKSIQPYLQRSSFPKDGTEVLQSIEDRKKLDGLYECILCACCSTSCPSYWWNQEQYLGPAVLMQAYRWLIDSRDQATKTRKAMLNNSMSLYRCHTIMNCTRTCPKGLNPGLAIAEIKKSLAFA.

Residues 1–20 constitute a mitochondrion transit peptide; it reads MLNVLLRRKAFCLVTKKGMA. Positions 36–127 constitute a 2Fe-2S ferredoxin-type domain; the sequence is FKVYRWNPDE…QLKIYPLPHM (92 aa). Residues cysteine 87, cysteine 92, cysteine 95, and cysteine 107 each contribute to the [2Fe-2S] cluster site. The 4Fe-4S ferredoxin-type domain maps to 169–199; it reads DRKKLDGLYECILCACCSTSCPSYWWNQEQY. [4Fe-4S] cluster contacts are provided by cysteine 179, cysteine 182, and cysteine 185. Cysteine 189 lines the [3Fe-4S] cluster pocket. Tryptophan 194 lines the a ubiquinone pocket. Residues cysteine 236 and cysteine 242 each contribute to the [3Fe-4S] cluster site. Cysteine 246 serves as a coordination point for [4Fe-4S] cluster.

The protein belongs to the succinate dehydrogenase/fumarate reductase iron-sulfur protein family. In terms of assembly, component of complex II composed of four subunits: a flavoprotein (FP), an iron-sulfur protein (IP), and a cytochrome b composed of a large and a small subunit. [2Fe-2S] cluster is required as a cofactor. Requires [3Fe-4S] cluster as cofactor. The cofactor is [4Fe-4S] cluster.

It is found in the mitochondrion inner membrane. It catalyses the reaction a quinone + succinate = fumarate + a quinol. The protein operates within carbohydrate metabolism; tricarboxylic acid cycle; fumarate from succinate (eukaryal route): step 1/1. In terms of biological role, subunit of succinate dehydrogenase (SDH) that is involved in complex II of the mitochondrial electron transport chain and is responsible for transferring electrons from succinate to ubiquinone (coenzyme Q). SDH1 and SDH2 form the catalytic dimer. Electrons flow from succinate to the FAD bound to SDH1, and sequentially through the iron-sulfur clusters bound to SDH2 and enter the membrane dimer formed by SDH3 and SDH4. This chain is Succinate dehydrogenase [ubiquinone] iron-sulfur subunit, mitochondrial (SDH2), found in Saccharomyces cerevisiae (strain ATCC 204508 / S288c) (Baker's yeast).